The sequence spans 138 residues: Nucleoside diphosphate kinase (138 aa).

ATP-binding residues include lysine 9, phenylalanine 57, arginine 85, threonine 91, arginine 102, and asparagine 112. Histidine 115 functions as the Pros-phosphohistidine intermediate in the catalytic mechanism.

It belongs to the NDK family. Homotetramer. The cofactor is Mg(2+).

The protein resides in the cytoplasm. It catalyses the reaction a 2'-deoxyribonucleoside 5'-diphosphate + ATP = a 2'-deoxyribonucleoside 5'-triphosphate + ADP. It carries out the reaction a ribonucleoside 5'-diphosphate + ATP = a ribonucleoside 5'-triphosphate + ADP. In terms of biological role, major role in the synthesis of nucleoside triphosphates other than ATP. The ATP gamma phosphate is transferred to the NDP beta phosphate via a ping-pong mechanism, using a phosphorylated active-site intermediate. The protein is Nucleoside diphosphate kinase of Trichlorobacter lovleyi (strain ATCC BAA-1151 / DSM 17278 / SZ) (Geobacter lovleyi).